The primary structure comprises 834 residues: Protein translocase subunit SecA (834 aa).

ATP contacts are provided by residues Gln-85, 103 to 107 (GEGKT), and Asp-491. Residues Cys-818, Cys-820, Cys-829, and Cys-830 each contribute to the Zn(2+) site.

This sequence belongs to the SecA family. As to quaternary structure, monomer and homodimer. Part of the essential Sec protein translocation apparatus which comprises SecA, SecYEG and auxiliary proteins SecDF. Other proteins may also be involved. The cofactor is Zn(2+).

The protein resides in the cell membrane. It is found in the cytoplasm. The catalysed reaction is ATP + H2O + cellular proteinSide 1 = ADP + phosphate + cellular proteinSide 2.. In terms of biological role, part of the Sec protein translocase complex. Interacts with the SecYEG preprotein conducting channel. Has a central role in coupling the hydrolysis of ATP to the transfer of proteins into and across the cell membrane, serving as an ATP-driven molecular motor driving the stepwise translocation of polypeptide chains across the membrane. This Clostridium kluyveri (strain ATCC 8527 / DSM 555 / NBRC 12016 / NCIMB 10680 / K1) protein is Protein translocase subunit SecA.